Here is a 276-residue protein sequence, read N- to C-terminus: 3,4-dihydroxyphenylacetate 2,3-dioxygenase (276 aa).

The cofactor is Fe cation.

The catalysed reaction is 3,4-dihydroxyphenylacetate + O2 = 2-hydroxy-5-carboxymethylmuconate semialdehyde + H(+). It participates in aromatic compound metabolism; 4-hydroxyphenylacetate degradation; pyruvate and succinate semialdehyde from 4-hydroxyphenylacetate: step 2/7. In terms of biological role, transforms homoprotocatechuic acid (HPC) into 5-carboxymethyl-2-hydroxy-muconic semialdehyde (CHMS). The sequence is that of 3,4-dihydroxyphenylacetate 2,3-dioxygenase (hpcB) from Escherichia coli.